The primary structure comprises 442 residues: D-inositol 3-phosphate glycosyltransferase (442 aa).

H26 is a binding site for 1D-myo-inositol 3-phosphate. Residues 32-33 and G40 each bind UDP-N-acetyl-alpha-D-glucosamine; that span reads QP. 1D-myo-inositol 3-phosphate-binding positions include 37–42, K95, Y128, T152, and R172; that span reads DAGGMN. UDP-N-acetyl-alpha-D-glucosamine contacts are provided by R246, K251, and Q304. Residues Y313, R314, and A316 each contribute to the Mg(2+) site. Residues E326 and E334 each contribute to the UDP-N-acetyl-alpha-D-glucosamine site. Residue T340 participates in Mg(2+) binding.

It belongs to the glycosyltransferase group 1 family. MshA subfamily. Homodimer.

The catalysed reaction is 1D-myo-inositol 3-phosphate + UDP-N-acetyl-alpha-D-glucosamine = 1D-myo-inositol 2-acetamido-2-deoxy-alpha-D-glucopyranoside 3-phosphate + UDP + H(+). Its function is as follows. Catalyzes the transfer of a N-acetyl-glucosamine moiety to 1D-myo-inositol 3-phosphate to produce 1D-myo-inositol 2-acetamido-2-deoxy-glucopyranoside 3-phosphate in the mycothiol biosynthesis pathway. The sequence is that of D-inositol 3-phosphate glycosyltransferase from Mycolicibacterium gilvum (strain PYR-GCK) (Mycobacterium gilvum (strain PYR-GCK)).